A 208-amino-acid polypeptide reads, in one-letter code: Outer-membrane lipoprotein LolB (208 aa).

Positions 1-21 are cleaved as a signal peptide; it reads MLSSKRRLMRLLPLASLLLTA. C22 carries N-palmitoyl cysteine lipidation. Residue C22 is the site of S-diacylglycerol cysteine attachment.

This sequence belongs to the LolB family. In terms of assembly, monomer.

The protein localises to the cell outer membrane. In terms of biological role, plays a critical role in the incorporation of lipoproteins in the outer membrane after they are released by the LolA protein. This Erwinia tasmaniensis (strain DSM 17950 / CFBP 7177 / CIP 109463 / NCPPB 4357 / Et1/99) protein is Outer-membrane lipoprotein LolB.